A 384-amino-acid polypeptide reads, in one-letter code: Deoxyguanosinetriphosphate triphosphohydrolase-like protein (384 aa).

The tract at residues 12 to 39 is disordered; it reads ELASYASDPSKTRGRRHSEPPPENRTEF. Positions 28–39 are enriched in basic and acidic residues; that stretch reads HSEPPPENRTEF. The 136-residue stretch at 73–208 folds into the HD domain; that stretch reads RLTHSLEVAQ…ANLADEVAYN (136 aa).

Belongs to the dGTPase family. Type 2 subfamily.

This Bordetella parapertussis (strain 12822 / ATCC BAA-587 / NCTC 13253) protein is Deoxyguanosinetriphosphate triphosphohydrolase-like protein.